A 520-amino-acid chain; its full sequence is Cytochrome b5 reductase 4 (520 aa).

The residue at position 1 (methionine 1) is an N-acetylmethionine. The disordered stretch occupies residues 1-27 (MLNVPSQAFPAPGSQQRVASQGRSKVP). A compositionally biased stretch (polar residues) spans 13-23 (GSQQRVASQGR). Positions 54-130 (LIEVTEEELK…LKECLVGRMA (77 aa)) constitute a Cytochrome b5 heme-binding domain. Positions 89 and 112 each coordinate heme. In terms of domain architecture, CS spans 164 to 255 (PSSPSYDWFQ…KETVSWKCLG (92 aa)). In terms of domain architecture, FAD-binding FR-type spans 272–384 (LYYRQCQLIS…SGPEGNFKVS (113 aa)). FAD-binding positions include 364 to 379 (DRLQ…GPEG) and 391 to 423 (DLFL…KVKL).

The protein belongs to the flavoprotein pyridine nucleotide cytochrome reductase family. Requires FAD as cofactor. Isoform 2 is expressed in testis, brain, skeletal muscle and in the male germline.

Its subcellular location is the endoplasmic reticulum. The catalysed reaction is 2 Fe(III)-[cytochrome b5] + NADH = 2 Fe(II)-[cytochrome b5] + NAD(+) + H(+). Functionally, NADH-cytochrome b5 reductase involved in endoplasmic reticulum stress response pathway. Plays a critical role in protecting pancreatic beta-cells against oxidant stress, possibly by protecting the cell from excess buildup of reactive oxygen species (ROS). The protein is Cytochrome b5 reductase 4 (Cyb5r4) of Rattus norvegicus (Rat).